A 462-amino-acid polypeptide reads, in one-letter code: ATP synthase subunit beta (462 aa).

Residue 151–158 participates in ATP binding; the sequence is GGAGVGKT.

Belongs to the ATPase alpha/beta chains family. F-type ATPases have 2 components, CF(1) - the catalytic core - and CF(0) - the membrane proton channel. CF(1) has five subunits: alpha(3), beta(3), gamma(1), delta(1), epsilon(1). CF(0) has four main subunits: a(1), b(1), b'(1) and c(9-12).

Its subcellular location is the cell inner membrane. The catalysed reaction is ATP + H2O + 4 H(+)(in) = ADP + phosphate + 5 H(+)(out). Functionally, produces ATP from ADP in the presence of a proton gradient across the membrane. The catalytic sites are hosted primarily by the beta subunits. The protein is ATP synthase subunit beta of Chlorobium phaeobacteroides (strain DSM 266 / SMG 266 / 2430).